The sequence spans 209 residues: Large ribosomal subunit protein uL3 (209 aa).

Positions 132-153 (ATHGNSLSHRVPGSIGQNQTPG) are disordered. Residue glutamine 150 is modified to N5-methylglutamine.

Belongs to the universal ribosomal protein uL3 family. As to quaternary structure, part of the 50S ribosomal subunit. Forms a cluster with proteins L14 and L19. Post-translationally, methylated by PrmB.

In terms of biological role, one of the primary rRNA binding proteins, it binds directly near the 3'-end of the 23S rRNA, where it nucleates assembly of the 50S subunit. This chain is Large ribosomal subunit protein uL3, found in Erwinia tasmaniensis (strain DSM 17950 / CFBP 7177 / CIP 109463 / NCPPB 4357 / Et1/99).